The sequence spans 1838 residues: MDVHTRWKAARPGALLLSSPLLLFLLLLWAPPSSRAAQPADLLEMLDFHNLPSGVTKTTGFCATRRSSSEPDVAYRVSKDAQLSMPTKQLYPESGFPEDFSILTTVKAKKGSQAFLVSIYNEQGIQQLGLELGRSPVFLYEDHTGKPGPEEYPLFPGINLSDGKWHRIALSVYKKNVTLILDCKKKITKFLSRSDHPIIDTNGIVMFGSRILDDEIFEGDIQQLLFVSDNRAAYDYCEHYSPDCDTAVPDTPQSQDPNPDEYYPEGEGETYYYEYPYYEDPEDPGKEPAPTQKPVEAARETTEVPEEQTQPLPEAPTVPETSDTADKEDSLGIGDYDYVPPDDYYTPPPYEDFGYGEGVENPDQPTNPDSGAEVPTSTTVTSNTSNPAPGEGKDDLGGEFTEETIKNLEENYYDPYFDPDSDSSVSPSEIGPGMPANQDTIFEGIGGPRGEKGQKGEPAIIEPGMLIEGPPGPEGPAGLPGPPGTTGPTGQMGDPGERGPPGRPGLPGADGLPGPPGTMLMLPFRFGGGGDAGSKGPMVSAQESQAQAILQQARLALRGPAGPMGLTGRPGPMGPPGSGGLKGEPGDMGPQGPRGVQGPPGPTGKPGRRGRAGSDGARGMPGQTGPKGDRGFDGLAGLPGEKGHRGDPGPSGPPGIPGDDGERGDDGEVGPRGLPGEPGPRGLLGPKGPPGPPGPPGVTGMDGQPGPKGNVGPQGEPGPPGQQGNPGAQGLPGPQGAIGPPGEKGPLGKPGLPGMPGADGPPGHPGKEGPPGEKGGQGPPGPQGPIGYPGPRGVKGADGIRGLKGTKGEKGEDGFPGFKGDMGIKGDRGEIGPPGPRGEDGPEGPKGRGGPNGDPGPLGPTGEKGKLGVPGLPGYPGRQGPKGSIGFPGFPGANGEKGGRGTPGKPGPRGQRGPTGPRGERGPRGITGKPGPKGNSGGDGPAGPPGERGPNGPQGPTGFPGPKGPPGPPGKDGLPGHPGQRGETGFQGKTGPPGPPGVVGPQGPTGETGPMGERGHPGPPGPPGEQGLPGAAGKEGTKGDPGPAGLPGKDGPPGLRGFPGDRGLPGPVGALGLKGSEGPPGPPGPAGSPGERGPAGAAGPIGIPGRPGPQGPPGPAGEKGLPGEKGPQGPAGRDGLQGPVGLPGPAGPVGPPGEDGDKGEIGEPGQKGSKGDKGEQGPPGPTGPQGPIGQPGPSGADGEPGPRGQQGLFGQKGDEGSRGFPGPPGPVGLQGLPGPPGEKGETGDVGQMGPPGPPGPRGPSGAPGADGPQGPPGGIGNPGAVGEKGEPGEAGDPGLPGEGGPLGPKGERGEKGEAGPSGAAGPPGPKGPPGDDGPKGSPGPVGFPGDPGPPGEPGPAGQDGPPGDKGDDGEPGQTGSPGPTGEPGPSGPPGKRGPPGPAGPEGRQGEKGAKGEAGLEGPPGKTGPIGPQGAPGKPGPDGLRGIPGPVGEQGLPGSPGPDGPPGPMGPPGLPGLKGDSGPKGEKGHPGLIGLIGPPGEQGEKGDRGLPGPQGSSGPKGDQGITGPSGPLGPPGPPGLPGPPGPKGAKGSSGPTGPKGEAGHPGLPGPPGPPGEVIQPLPIQASRTRRNIDASQLLDDGAGESYVDYADGMEEIFGSLNSLKLEIEQMKRPLGTQQNPARTCKDLQLCHPDFPDGEYWVDPNQGCSRDSFKVYCNFTAGGSTCVFPDKKSEGARITSWPKENPGSWFSEFKRGKLLSYVDAEGNPVGVVQMTFLRLLSASAHQNVTYNCYQSVAWQDAATGSYDKAIRFLGSNDEEMSYDNNPYIRALVDGCATKKGYQKTVLEIDTPKVEQVPIVDIMFNDFGEASQKFGFEVGPACFLG.

A signal peptide spans 1–36 (MDVHTRWKAARPGALLLSSPLLLFLLLLWAPPSSRA). The Laminin G-like domain maps to 72–244 (DVAYRVSKDA…DYCEHYSPDC (173 aa)). Positions 231–443 (RAAYDYCEHY…MPANQDTIFE (213 aa)) are nonhelical region. Sulfotyrosine occurs at positions 234, 236, 240, 262, and 263. 2 disordered regions span residues 242–545 (PDCD…QESQ) and 559–1574 (GPAG…EVIQ). Positions 258-268 (NPDEYYPEGEG) are enriched in acidic residues. 4 stretches are compositionally biased toward low complexity: residues 335–345 (DYDYVPPDDYY), 374–387 (VPTS…TSNP), 413–428 (YDPY…VSPS), and 460–469 (IIEPGMLIEG). Positions 444 to 558 (GIGGPRGEKG…ILQQARLALR (115 aa)) are interrupted collagenous region. Residues 470–485 (PPGPEGPAGLPGPPGT) show a composition bias toward pro residues. 2 stretches are compositionally biased toward low complexity: residues 506–523 (LPGA…LMLP) and 559–570 (GPAGPMGLTGRP). The triple-helical region stretch occupies residues 559 to 1570 (GPAGPMGLTG…GLPGPPGPPG (1012 aa)). 4-hydroxyproline occurs at positions 570, 576, and 621. Lysine 627 carries the post-translational modification 5-hydroxylysine. Proline 639 is subject to 4-hydroxyproline. Lysine 642 carries the post-translational modification 5-hydroxylysine. 4-hydroxyproline is present on residues proline 648, proline 654, proline 657, proline 675, and proline 678. A compositionally biased stretch (low complexity) spans 671–686 (PRGLPGEPGPRGLLGP). 3-hydroxyproline occurs at positions 680 and 686. Positions 687-696 (KGPPGPPGPP) are enriched in pro residues. 4-hydroxyproline occurs at positions 690, 696, and 705. 5-hydroxylysine is present on lysine 708. 4-hydroxyproline is present on residues proline 717, proline 720, proline 726, and proline 732. A compositionally biased stretch (low complexity) spans 722–741 (QQGNPGAQGLPGPQGAIGPP). Lysine 744 carries the 5-hydroxylysine modification. Residues 747–756 (LGKPGLPGMP) are compositionally biased toward low complexity. Residues proline 750, proline 756, proline 762, proline 765, and proline 771 each carry the 4-hydroxyproline modification. Lysine 774 is modified (5-hydroxylysine). A 4-hydroxyproline mark is found at proline 780 and proline 789. Residues lysine 795, lysine 804, lysine 807, and lysine 810 each carry the 5-hydroxylysine modification. The residue at position 816 (proline 816) is a 4-hydroxyproline. Lysine 819 is subject to 5-hydroxylysine. Proline 834 carries the post-translational modification 4-hydroxyproline. A compositionally biased stretch (basic and acidic residues) spans 837–846 (RGEDGPEGPK). Residues lysine 846 and lysine 864 each carry the 5-hydroxylysine modification. 4-hydroxyproline occurs at positions 870, 873, and 876. Lysine 882 is subject to 5-hydroxylysine. Residues proline 888 and proline 891 each carry the 4-hydroxyproline modification. Lysine 897 carries the 5-hydroxylysine modification. 2 positions are modified to 4-hydroxyproline: proline 903 and proline 906. Residues 908 to 917 (PRGQRGPTGP) are compositionally biased toward low complexity. Residues proline 930 and proline 945 each carry the 4-hydroxyproline modification. 2 stretches are compositionally biased toward low complexity: residues 971–990 (KDGL…QGKT) and 999–1011 (VGPQ…TGPM). A 4-hydroxyproline mark is found at proline 1017, proline 1020, proline 1023, and proline 1029. A compositionally biased stretch (low complexity) spans 1088–1104 (SPGERGPAGAAGPIGIP). The span at 1106–1115 (RPGPQGPPGP) shows a compositional bias: pro residues. 4-hydroxyproline occurs at positions 1221 and 1224. Positions 1259 to 1268 (PSGAPGADGP) are enriched in low complexity. The span at 1294–1303 (GLPGEGGPLG) shows a compositional bias: gly residues. 2 stretches are compositionally biased toward pro residues: residues 1380–1398 (TGEP…PGPA) and 1454–1469 (SPGP…PPGL). 4-hydroxyproline is present on residues proline 1467 and proline 1470. Over residues 1485–1494 (PGLIGLIGPP) the composition is skewed to low complexity. Residues 1526–1541 (PLGPPGPPGLPGPPGP) show a composition bias toward pro residues. Residues 1542 to 1554 (KGAKGSSGPTGPK) are compositionally biased toward low complexity. The nonhelical region stretch occupies residues 1571-1605 (EVIQPLPIQASRTRRNIDASQLLDDGAGESYVDYA). Sulfotyrosine is present on residues tyrosine 1601 and tyrosine 1604. In terms of domain architecture, Fibrillar collagen NC1 spans 1609–1837 (EEIFGSLNSL…GFEVGPACFL (229 aa)).

Belongs to the fibrillar collagen family. As to quaternary structure, trimers of two alpha 1(V) and one alpha 2(V) chains in most tissues and trimers of one alpha 1(V), one alpha 2(V), and one alpha 3(V) chains in placenta. Interacts with CSPG4. In terms of processing, hydroxylation on proline residues within the sequence motif, GXPG, is most likely to be 4-hydroxy as this fits the requirement for 4-hydroxylation in vertebrates. Post-translationally, sulfated on 40% of tyrosines. As to expression, widely expressed. Isoform 2 is more highly expressed in liver, kidney and lung.

The protein resides in the secreted. The protein localises to the extracellular space. Its subcellular location is the extracellular matrix. In terms of biological role, type V collagen is a member of group I collagen (fibrillar forming collagen). It is a minor connective tissue component of nearly ubiquitous distribution. Type V collagen binds to DNA, heparan sulfate, thrombospondin, heparin, and insulin. Transcriptionally activated by CEBPZ, which recognizes a CCAAT-like motif, CAAAT in the COL5A1 promoter. The sequence is that of Collagen alpha-1(V) chain (Col5a1) from Mus musculus (Mouse).